We begin with the raw amino-acid sequence, 1049 residues long: Protein phosphatase Slingshot homolog 1 (1049 aa).

The segment covering Met-1 to Pro-12 has biased composition (polar residues). The disordered stretch occupies residues Met-1–Ser-28. Ala-2 bears the N-acetylalanine mark. Residues Ser-13 to Glu-25 are compositionally biased toward low complexity. Phosphoserine is present on residues Ser-37 and Ser-57. Residues Glu-249–Gly-304 form the DEK-C domain. Positions Lys-308–Ala-449 constitute a Tyrosine-protein phosphatase domain. Residue Cys-393 is the Phosphocysteine intermediate of the active site. A disordered region spans residues Lys-456 to Ala-499. Residues Trp-458 to Gln-468 are compositionally biased toward polar residues. Position 515 is a phosphoserine (Ser-515). Disordered regions lie at residues Ala-544–Gln-603, His-693–Lys-787, His-825–Pro-899, and Pro-923–Thr-955. Residues Cys-564–Glu-573 are compositionally biased toward basic and acidic residues. Ser-576 carries the phosphoserine modification. Residues Gly-731–Glu-742 show a composition bias toward low complexity. A compositionally biased stretch (basic and acidic residues) spans Val-772–Lys-787. Ser-897 is modified (phosphoserine). The segment at Ser-897 to Ser-1049 is interaction with YWHAG. The segment covering Ser-925 to Ser-943 has biased composition (low complexity). Ser-978 is subject to Phosphoserine. A disordered region spans residues Thr-989–Ser-1049. Residues Val-1001 to Ser-1013 are compositionally biased toward polar residues.

It belongs to the protein-tyrosine phosphatase family. Interacts with actin and this stimulates phosphatase activity. Also interacts with LIMK1 and with the 14-3-3 proteins YWHAB, YWHAG, YWHAQ, and YWHAZ. Interaction with 14-3-3 proteins inhibits phosphatase activity and also blocks recruitment to lamellipodia and stimulation by actin. Phosphorylated. Inhibitory phosphorylation by PAK4 promotes binding to YWHAZ. Phosphorylation at Ser-978 is decreased by stimuli which promote actin reorganization and lamellipodia formation. Can be dephosphorylated and activated by PPP3CA/calcineurin A. Phosphorylation decreases immediately prior to telophase.

It localises to the cytoplasm. The protein resides in the cytoskeleton. It is found in the cell projection. Its subcellular location is the lamellipodium. The protein localises to the cleavage furrow. It localises to the midbody. It carries out the reaction O-phospho-L-tyrosyl-[protein] + H2O = L-tyrosyl-[protein] + phosphate. It catalyses the reaction O-phospho-L-seryl-[protein] + H2O = L-seryl-[protein] + phosphate. The enzyme catalyses O-phospho-L-threonyl-[protein] + H2O = L-threonyl-[protein] + phosphate. Its function is as follows. Protein phosphatase which regulates actin filament dynamics. Dephosphorylates and activates the actin binding/depolymerizing factor cofilin, which subsequently binds to actin filaments and stimulates their disassembly. Inhibitory phosphorylation of cofilin is mediated by LIMK1, which may also be dephosphorylated and inactivated by this protein. In Homo sapiens (Human), this protein is Protein phosphatase Slingshot homolog 1.